Consider the following 399-residue polypeptide: Brefeldin A resistance protein (399 aa).

Composition is skewed to basic and acidic residues over residues 1–31 (MTSK…DETS), 49–69 (SKSE…KETT), and 101–130 (KVEE…KESA). 2 disordered regions span residues 1 to 173 (MTSK…FGAF) and 191 to 269 (KKFA…SEII). Positions 138-157 (SPFSQFASFSNASSPFSNVS) are enriched in low complexity. 2 stretches are compositionally biased toward basic and acidic residues: residues 205–217 (SGKE…KSSE) and 241–252 (TKSEPKEADKGS). A compositionally biased stretch (polar residues) spans 253-263 (GDSTKSTMHQL). The 141-residue stretch at 256 to 396 (TKSTMHQLSD…VLEAIPKGGR (141 aa)) folds into the RanBD1 domain.

Phosphorylated.

It is found in the nucleus. In Schizosaccharomyces pombe (strain 972 / ATCC 24843) (Fission yeast), this protein is Brefeldin A resistance protein (hba1).